The primary structure comprises 970 residues: Isoleucine--tRNA ligase (970 aa).

Residues 65–75 carry the 'HIGH' region motif; sequence PYANGHLHIGH. An L-isoleucyl-5'-AMP-binding site is contributed by glutamate 608. Positions 649 to 653 match the 'KMSKS' region motif; that stretch reads KMSKS. Lysine 652 lines the ATP pocket. Zn(2+) contacts are provided by cysteine 943, cysteine 946, cysteine 962, and cysteine 965.

Belongs to the class-I aminoacyl-tRNA synthetase family. IleS type 1 subfamily. Monomer. Zn(2+) serves as cofactor.

The protein resides in the cytoplasm. The catalysed reaction is tRNA(Ile) + L-isoleucine + ATP = L-isoleucyl-tRNA(Ile) + AMP + diphosphate. Functionally, catalyzes the attachment of isoleucine to tRNA(Ile). As IleRS can inadvertently accommodate and process structurally similar amino acids such as valine, to avoid such errors it has two additional distinct tRNA(Ile)-dependent editing activities. One activity is designated as 'pretransfer' editing and involves the hydrolysis of activated Val-AMP. The other activity is designated 'posttransfer' editing and involves deacylation of mischarged Val-tRNA(Ile). This chain is Isoleucine--tRNA ligase, found in Ruegeria pomeroyi (strain ATCC 700808 / DSM 15171 / DSS-3) (Silicibacter pomeroyi).